The primary structure comprises 367 residues: Probable peptidoglycan glycosyltransferase FtsW (367 aa).

9 helical membrane-spanning segments follow: residues 32-52, 57-77, 87-107, 119-139, 149-169, 171-191, 251-271, 296-316, and 323-343; these read LIFILIGLFAMAFTFLMPMKF, AFWGYCICFLLLALVLVPGIG, IPIGPFNFQPSEFAKLTMIVF, IHGLKGFLPIIIYLGIICFLL, MVVVAIVMSILLLGGLGFALF, LLFLSAVLLVIAAILTAPWRM, VVGEELGFVGIFFVILLFVLL, GVVVWFGVQAIVNLGVCFGVF, and LPFISYGGSSIVISLMAFGLL.

It belongs to the SEDS family. FtsW subfamily.

Its subcellular location is the cell inner membrane. It catalyses the reaction [GlcNAc-(1-&gt;4)-Mur2Ac(oyl-L-Ala-gamma-D-Glu-L-Lys-D-Ala-D-Ala)](n)-di-trans,octa-cis-undecaprenyl diphosphate + beta-D-GlcNAc-(1-&gt;4)-Mur2Ac(oyl-L-Ala-gamma-D-Glu-L-Lys-D-Ala-D-Ala)-di-trans,octa-cis-undecaprenyl diphosphate = [GlcNAc-(1-&gt;4)-Mur2Ac(oyl-L-Ala-gamma-D-Glu-L-Lys-D-Ala-D-Ala)](n+1)-di-trans,octa-cis-undecaprenyl diphosphate + di-trans,octa-cis-undecaprenyl diphosphate + H(+). Its pathway is cell wall biogenesis; peptidoglycan biosynthesis. Its function is as follows. Peptidoglycan polymerase that is essential for cell division. In Taylorella equigenitalis (strain MCE9), this protein is Probable peptidoglycan glycosyltransferase FtsW.